The primary structure comprises 362 residues: Probable cinnamyl alcohol dehydrogenase 9 (362 aa).

Cys45 contacts Zn(2+). Residue Ser47 coordinates NADP(+). Positions 67, 68, 98, 101, 104, 112, and 167 each coordinate Zn(2+). NADP(+) contacts are provided by residues Thr171, 192 to 197 (GLGGLG), 215 to 220 (STSPWK), Thr255, Gly279, and 302 to 304 (SMI).

Belongs to the zinc-containing alcohol dehydrogenase family. As to quaternary structure, homodimer. Zn(2+) serves as cofactor.

The catalysed reaction is (E)-cinnamyl alcohol + NADP(+) = (E)-cinnamaldehyde + NADPH + H(+). It catalyses the reaction (E)-coniferol + NADP(+) = (E)-coniferaldehyde + NADPH + H(+). The enzyme catalyses (E)-sinapyl alcohol + NADP(+) = (E)-sinapaldehyde + NADPH + H(+). It carries out the reaction (E)-4-coumaroyl alcohol + NADP(+) = (E)-4-coumaraldehyde + NADPH + H(+). The catalysed reaction is (E)-caffeyl alcohol + NADP(+) = (E)-caffeyl aldehyde + NADPH + H(+). It participates in aromatic compound metabolism; phenylpropanoid biosynthesis. Functionally, involved in lignin biosynthesis. Catalyzes the final step specific for the production of lignin monomers. Catalyzes the NADPH-dependent reduction of coniferaldehyde, 5-hydroxyconiferaldehyde, sinapaldehyde, 4-coumaraldehyde and caffeyl aldehyde to their respective alcohols. This is Probable cinnamyl alcohol dehydrogenase 9 from Oryza sativa subsp. japonica (Rice).